Consider the following 250-residue polypeptide: Hydroxyacylglutathione hydrolase (250 aa).

7 residues coordinate Zn(2+): His52, His54, Asp56, His57, His107, Asp128, and His166.

This sequence belongs to the metallo-beta-lactamase superfamily. Glyoxalase II family. Monomer. It depends on Zn(2+) as a cofactor.

It catalyses the reaction an S-(2-hydroxyacyl)glutathione + H2O = a 2-hydroxy carboxylate + glutathione + H(+). It functions in the pathway secondary metabolite metabolism; methylglyoxal degradation; (R)-lactate from methylglyoxal: step 2/2. In terms of biological role, thiolesterase that catalyzes the hydrolysis of S-D-lactoyl-glutathione to form glutathione and D-lactic acid. The sequence is that of Hydroxyacylglutathione hydrolase from Neisseria gonorrhoeae (strain NCCP11945).